A 48-amino-acid polypeptide reads, in one-letter code: Protein YgdT (48 aa).

In Escherichia coli (strain K12), this protein is Protein YgdT (ygdT).